The sequence spans 328 residues: Tetraacyldisaccharide 4'-kinase (328 aa).

58–65 (TMGGAGKT) is an ATP binding site.

The protein belongs to the LpxK family.

The catalysed reaction is a lipid A disaccharide + ATP = a lipid IVA + ADP + H(+). The protein operates within glycolipid biosynthesis; lipid IV(A) biosynthesis; lipid IV(A) from (3R)-3-hydroxytetradecanoyl-[acyl-carrier-protein] and UDP-N-acetyl-alpha-D-glucosamine: step 6/6. In terms of biological role, transfers the gamma-phosphate of ATP to the 4'-position of a tetraacyldisaccharide 1-phosphate intermediate (termed DS-1-P) to form tetraacyldisaccharide 1,4'-bis-phosphate (lipid IVA). The chain is Tetraacyldisaccharide 4'-kinase from Phenylobacterium zucineum (strain HLK1).